Here is a 2032-residue protein sequence, read N- to C-terminus: Cytoskeleton-associated protein 5 (2032 aa).

TOG stretches follow at residues 1–223 (MGDD…KLPT) and 268–502 (YELL…LIHG). Lys-48 bears the N6-acetyllysine mark. 3 HEAT repeats span residues 159–197 (IILL…WIRD), 356–394 (GQYA…TTTL), and 434–472 (KSLL…VVGE). The disordered stretch occupies residues 516-579 (PLPGRTAASG…GTKNKKGLET (64 aa)). Positions 543 to 554 (LKKAPAAKAGGP) are enriched in low complexity. The segment at 588-817 (SIEVCEEKAS…EFEKMQGQSP (230 aa)) is TOG 3. The HEAT 4 repeat unit spans residues 750-788 (GLNVKAFISNVKTALAATNPAVRTAAITLLGVMYLYVGP). A disordered region spans residues 811 to 851 (KMQGQSPPAPTRGISKHSTSGTDEGEDGDEPDDGSNDVVDL). Ser-816 and Ser-845 each carry phosphoserine. Over residues 833–845 (DEGEDGDEPDDGS) the composition is skewed to acidic residues. TOG regions lie at residues 853-1081 (PRTE…VNMP) and 1193-1428 (IEQL…KRPS). 3 HEAT repeats span residues 855–893 (TEIS…DAKF), 936–974 (KQHV…QTGM), and 1013–1051 (PTDL…HLGY). The interval 1077 to 1160 (KVNMPAKPAP…KEDEDKSGPI (84 aa)) is disordered. HEAT repeat units follow at residues 1284–1322 (ENEA…VYPA), 1324–1357 (KMFP…SYGM), and 1361–1399 (QPTP…VHGD). Positions 1422-1443 (RSAKRPSAAPIKQVEEKPQRAQ) are disordered. Ser-1469 carries the phosphoserine modification. The segment at 1801–1822 (SMDQTGSKSDKETEKGASRIDE) is disordered. The segment covering 1808–1822 (KSDKETEKGASRIDE) has biased composition (basic and acidic residues). Ser-1861 carries the post-translational modification Phosphoserine. The interaction with TACC3 stretch occupies residues 1932 to 1957 (PSVYLERLKILRQRCGLDNTKQDDRP). Residues 1949-2032 (DNTKQDDRPP…RLERIKSSRK (84 aa)) are disordered. Residues 1971–1983 (VASSTDMLHSKLS) show a composition bias toward polar residues. The segment covering 1984–1997 (QLRESREQHQHSDL) has biased composition (basic and acidic residues). Residues 2002–2014 (THSSGTVTSSSST) are compositionally biased toward low complexity. Residues 2018–2032 (DDLKKRLERIKSSRK) show a composition bias toward basic and acidic residues.

It belongs to the TOG/XMAP215 family. Interacts with TACC1. Interacts with SLAIN2 and SLAIN1. Interacts with HNRNPA2B1. Interacts with TACC3 independently of clathrin. Interacts with TACC3 and clathrin forming the TACC3/ch-TOG/clathrin complex located at spindle inter-microtubules bridges. Interacts with NDC80; indicative for an association with the NDC80 complex. In terms of tissue distribution, overexpressed in hepatomas and colonic tumors. Also expressed in skeletal muscle, brain, heart, placenta, lung, liver, kidney and pancreas. Expression is elevated in the brain; highly expressed in the Purkinje cell bodies of the cerebellum.

The protein localises to the cytoplasm. It is found in the cytoskeleton. The protein resides in the microtubule organizing center. Its subcellular location is the centrosome. It localises to the spindle pole. The protein localises to the spindle. It is found in the chromosome. The protein resides in the centromere. Its subcellular location is the kinetochore. Functionally, binds to the plus end of microtubules and regulates microtubule dynamics and microtubule organization. Acts as a processive microtubule polymerase. Promotes cytoplasmic microtubule nucleation and elongation. Plays a major role in organizing spindle poles. In spindle formation protects kinetochore microtubules from depolymerization by KIF2C and has an essential role in centrosomal microtubule assembly independently of KIF2C activity. Contributes to centrosome integrity. Acts as a component of the TACC3/ch-TOG/clathrin complex proposed to contribute to stabilization of kinetochore fibers of the mitotic spindle by acting as inter-microtubule bridge. The TACC3/ch-TOG/clathrin complex is required for the maintenance of kinetochore fiber tension. Enhances the strength of NDC80 complex-mediated kinetochore-tip microtubule attachments. In Homo sapiens (Human), this protein is Cytoskeleton-associated protein 5 (CKAP5).